The sequence spans 652 residues: Drebrin (652 aa).

Ala-2 is modified (N-acetylalanine). The ADF-H domain maps to 5–134 (GFAAHRLELL…DPGAIGQRLS (130 aa)). Basic and acidic residues-rich tracts occupy residues 211–236 (MEQE…EEHR) and 288–298 (DNPREFFKQQE). Disordered regions lie at residues 211–350 (MEQE…YITC) and 371–652 (SAAG…GGGL). Low complexity predominate over residues 328-340 (SGPPSSSSSSSSP). Positions 507–517 (PDTPAGPPVPP) are enriched in pro residues. 2 stretches are compositionally biased toward acidic residues: residues 540-554 (QHEE…EEAT) and 640-652 (PLPE…GGGL).

In terms of tissue distribution, brain neurons.

The protein localises to the cytoplasm. The protein resides in the cell projection. It localises to the dendrite. It is found in the cell cortex. Its subcellular location is the cell junction. The protein localises to the growth cone. Its function is as follows. Actin cytoskeleton-organizing protein that plays a role in the formation of cell projections. Plays a role in dendritic spine morphogenesis and organization, including the localization of the dopamine receptor DRD1 to the dendritic spines. Involved in synaptic plasticity. The sequence is that of Drebrin (DBN1) from Gallus gallus (Chicken).